The primary structure comprises 436 residues: Two-pore potassium channel 3 (436 aa).

The Cytoplasmic portion of the chain corresponds to Met-1 to Ser-148. The segment at Ser-62–Ala-117 is disordered. Over residues Pro-71 to Pro-92 the composition is skewed to low complexity. Residues Leu-93–Glu-102 are compositionally biased toward pro residues. The chain crosses the membrane as a helical span at residues Val-149 to Trp-169. The segment at residues Asp-185 to Pro-204 is an intramembrane region (pore-forming). Residues Phe-212–Val-232 traverse the membrane as a helical segment. Residues Ser-233–Val-274 are Cytoplasmic-facing. Residues Ala-275–Ile-295 traverse the membrane as a helical segment. Positions Asp-302–Phe-321 form an intramembrane region, pore-forming. A helical transmembrane segment spans residues Leu-328–Leu-348. Residues Ala-349–Asp-436 are Cytoplasmic-facing. EF-hand domains follow at residues Leu-365–Lys-400 and Lys-404–Asp-436. Residues Asp-378, Asp-380, Asn-382, Cys-384, Glu-389, Asp-417, Asn-421, Lys-423, and Asp-428 each contribute to the Ca(2+) site.

This sequence belongs to the two pore domain potassium channel (TC 1.A.1.7) family. As to quaternary structure, homodimer. As to expression, expressed in roots, cotyledons, stems, hypocotyls, leaves and flowers. Detected in root tips and in mesophyll cells and guard cells of the leaves.

The protein localises to the vacuole membrane. It is found in the plastid. Its subcellular location is the chloroplast thylakoid membrane. Inhibited by barium, but not by tetraethylammonium. Functionally, two-pore potassium channel modulating the proton motive force (pmf) necessary to convert photochemical energy into physiological functions. Mediates the potassium efflux from the thylakoid lumen required for the regulation of the transmembrane electrical potential, the enhancement of the pH gradient for ATP synthesis, the regulation of electron flow, and pH-mediated photoprotective responses. Requires calcium for channel activity. This Arabidopsis thaliana (Mouse-ear cress) protein is Two-pore potassium channel 3.